The sequence spans 265 residues: MDWFQALVLALIQGLTEFLPISSSAHLILPSQILGWPDQGLAFDVAVHLGTLLAVMMYYRRDLIAMVGGAGLAVQQRRMNDDLKLGLLVALATIPAVVFGFLGDDFIERELRSALVIAITTLVFGALLWASDAFGKREFSLARLGVAGAIFIGLAQALALIPGTSRSGITITAALALGYRREDAARFSFLLSIPVILGAGLLKTKDLIEQQVVVDWGMMALGVIVSAVTAYLTIVFFIRLLERVGMLPFVVYRLILGVALLFWLA.

The next 8 membrane-spanning stretches (helical) occupy residues 1 to 21, 39 to 59, 83 to 103, 114 to 134, 144 to 164, 188 to 208, 218 to 238, and 244 to 264; these read MDWFQALVLALIQGLTEFLPI, QGLAFDVAVHLGTLLAVMMYY, LKLGLLVALATIPAVVFGFLG, ALVIAITTLVFGALLWASDAF, LGVAGAIFIGLAQALALIPGT, SFLLSIPVILGAGLLKTKDLI, MMALGVIVSAVTAYLTIVFFI, and VGMLPFVVYRLILGVALLFWL.

This sequence belongs to the UppP family.

It localises to the cell inner membrane. It carries out the reaction di-trans,octa-cis-undecaprenyl diphosphate + H2O = di-trans,octa-cis-undecaprenyl phosphate + phosphate + H(+). Catalyzes the dephosphorylation of undecaprenyl diphosphate (UPP). Confers resistance to bacitracin. In Alcanivorax borkumensis (strain ATCC 700651 / DSM 11573 / NCIMB 13689 / SK2), this protein is Undecaprenyl-diphosphatase.